Here is a 451-residue protein sequence, read N- to C-terminus: UDP-N-acetylmuramoylalanine--D-glutamate ligase (451 aa).

Residue 120–126 coordinates ATP; that stretch reads GSNGKTT.

It belongs to the MurCDEF family.

The protein localises to the cytoplasm. The catalysed reaction is UDP-N-acetyl-alpha-D-muramoyl-L-alanine + D-glutamate + ATP = UDP-N-acetyl-alpha-D-muramoyl-L-alanyl-D-glutamate + ADP + phosphate + H(+). Its pathway is cell wall biogenesis; peptidoglycan biosynthesis. In terms of biological role, cell wall formation. Catalyzes the addition of glutamate to the nucleotide precursor UDP-N-acetylmuramoyl-L-alanine (UMA). The protein is UDP-N-acetylmuramoylalanine--D-glutamate ligase of Bacillus pumilus (strain SAFR-032).